Here is a 446-residue protein sequence, read N- to C-terminus: Nitrate/nitrite binding protein NrtA (446 aa).

The first 28 residues, 1–28 (MSNFSRSTRRKFMFTAGAAAIGGVVLHG), serve as a signal peptide directing secretion. The N-palmitoyl cysteine moiety is linked to residue C29. A lipid anchor (S-diacylglycerol cysteine) is attached at C29. Residues W102, Q155, H196, G240, and K269 each coordinate nitrate.

This sequence belongs to the CmpA/NrtA family. In terms of assembly, the complex is composed of two ATP-binding proteins (NrtC and NrtD), two transmembrane proteins (NrtB) and a solute-binding protein (NrtA).

It localises to the cell inner membrane. Functionally, part of the ABC transporter complex NrtABCD involved in nitrate uptake. The complex is probably also involved in nitrite transport. NrtA is the substrate-binding protein. Binds nitrate. The polypeptide is Nitrate/nitrite binding protein NrtA (Synechocystis sp. (strain ATCC 27184 / PCC 6803 / Kazusa)).